An 890-amino-acid polypeptide reads, in one-letter code: Phosphatidate phosphatase LPIN1 (890 aa).

The N-LIP stretch occupies residues 1–108 (MNYVGQLAGQ…IPMHLATSPI (108 aa)). Residues Ser-106 and Ser-150 each carry the phosphoserine modification. 4 disordered regions span residues 125-183 (VDRM…DMFP), 228-300 (SYPN…SSRK), 365-392 (KPPS…SRHL), and 421-456 (SGLA…STSD). Residues 152–161 (VKKRRKRRRK) are compositionally biased toward basic residues. The short motif at 153–158 (KKRRKR) is the Nuclear localization signal element. Composition is skewed to basic and acidic residues over residues 162–172 (SQLDSLKRDDN) and 252–265 (SDSE…ERTG). Residues Ser-252, Ser-254, and Ser-260 each carry the phosphoserine modification. Thr-264 is subject to Phosphothreonine. At Ser-294 the chain carries Phosphoserine. An N6-acetyllysine modification is found at Lys-425. The segment covering 431-440 (GARSANQSPQ) has biased composition (polar residues). Residues Ser-434, Ser-438, and Ser-449 each carry the phosphoserine modification. Over residues 441–456 (SVGSSGVDSGVESTSD) the composition is skewed to low complexity. A Glycyl lysine isopeptide (Lys-Gly) (interchain with G-Cter in SUMO) cross-link involves residue Lys-565. Residues 566-616 (EESKPEQCLAGKAHSTGEQPPQLSLATRVKHESSSSDEERAAAKPSNAGHL) form a disordered region. A compositionally biased stretch (polar residues) spans 581 to 590 (TGEQPPQLSL). Positions 594 to 607 (VKHESSSSDEERAA) are enriched in basic and acidic residues. The residue at position 595 (Lys-595) is an N6-acetyllysine. Residue Lys-595 forms a Glycyl lysine isopeptide (Lys-Gly) (interchain with G-Cter in SUMO) linkage. Ser-600 and Ser-601 each carry phosphoserine. The interval 624 to 830 (YKKTLRLTSE…VNPKGELVQE (207 aa)) is C-LIP. The DXDXT motif signature appears at 678 to 682 (DIDGT). Positions 689–693 (LGHIL) match the LXXIL motif motif. 2 positions are modified to phosphoserine: Ser-887 and Ser-889.

It belongs to the lipin family. As to quaternary structure, interacts (via LXXIL motif) with PPARA. Interacts with PPARGC1A. Interaction with PPARA and PPARGC1A leads to the formation of a complex that modulates gene transcription. Interacts with MEF2C. Requires Mg(2+) as cofactor. It depends on Mn(2+) as a cofactor. In terms of processing, phosphorylated at multiple sites by mTOR in response to insulin, leading to its inactivation. Phosphorylation does not affect the catalytic activity but regulates the localization. Phosphorylation is decreased by epinephrine. Dephosphorylated by the CTDNEP1-CNEP1R1 complex. Dephosphorylation following mTOR inhibition promotes its activity. Acetylation at Lys-425 and Lys-595 by KAT5 in response to fatty acids promotes translocation to the endoplasmic reticulum and synthesis of diacylglycerol. Post-translationally, sumoylated. Specifically expressed in skeletal muscle. Also abundant in adipose tissue. Lower levels in some portions of the digestive tract.

Its subcellular location is the cytoplasm. The protein resides in the cytosol. It is found in the endoplasmic reticulum membrane. The protein localises to the nucleus membrane. The catalysed reaction is a 1,2-diacyl-sn-glycero-3-phosphate + H2O = a 1,2-diacyl-sn-glycerol + phosphate. It carries out the reaction 1-octadecanoyl-2-(4Z,7Z,10Z,13Z,16Z,19Z-docosahexaenoyl)-sn-glycero-3-phosphate + H2O = 1-octadecanoyl-2-(4Z,7Z,10Z,13Z,16Z,19Z-docosahexaenoyl)-sn-glycerol + phosphate. The enzyme catalyses 1-octadecanoyl-2-(5Z,8Z,11Z,14Z-eicosatetraenoyl)-sn-glycero-3-phosphate + H2O = 1-octadecanoyl-2-(5Z,8Z,11Z,14Z-eicosatetraenoyl)-sn-glycerol + phosphate. It catalyses the reaction 1-octadecanoyl-2-(9Z,12Z-octadecadienoyl)-sn-glycero-3-phosphate + H2O = 1-octadecanoyl-2-(9Z,12Z)-octadecadienoyl-sn-glycerol + phosphate. The catalysed reaction is 1-octadecanoyl-2-(9Z-octadecenoyl)-sn-glycero-3-phosphate + H2O = 1-octadecanoyl-2-(9Z-octadecenoyl)-sn-glycerol + phosphate. It carries out the reaction 1-hexadecanoyl-2-(4Z,7Z,10Z,13Z,16Z,19Z-docosahexaenoyl)-sn-glycero-3-phosphate + H2O = 1-hexadecanoyl-2-(4Z,7Z,10Z,13Z,16Z,19Z-docosahexaenoyl)-sn-glycerol + phosphate. The enzyme catalyses 1,2-dioctadecanoyl-sn-glycero-3-phosphate + H2O = 1,2-dioctadecanoyl-sn-glycerol + phosphate. It catalyses the reaction 1-hexadecanoyl-2-(5Z,8Z,11Z,14Z-eicosatetraenoyl)-sn-glycero-3-phosphate + H2O = 1-hexadecanoyl-2-(5Z,8Z,11Z,14Z-eicosatetraenoyl)-sn-glycerol + phosphate. The catalysed reaction is 1-hexadecanoyl-2-(9Z,12Z-octadecadienoyl)-sn-glycero-3-phosphate + H2O = 1-hexadecanoyl-2-(9Z,12Z-octadecadienoyl)-sn-glycerol + phosphate. It carries out the reaction 1-hexadecanoyl-2-(9Z-octadecenoyl)-sn-glycero-3-phosphate + H2O = 1-hexadecanoyl-2-(9Z-octadecenoyl)-sn-glycerol + phosphate. The enzyme catalyses 1,2-di-(4Z,7Z,10Z,13Z,16Z,19Z-docosahexaenoyl)-sn-glycero-3-phosphate + H2O = 1,2-di-(4Z,7Z,10Z,13Z,16Z,19Z-docosahexaenoyl)-sn-glycerol + phosphate. It catalyses the reaction 1,2-di-(5Z,8Z,11Z,14Z)-eicosatetraenoyl-sn-glycero-3-phosphate + H2O = 1,2-di-(5Z,8Z,11Z,14Z)-eicosatetraenoyl-sn-glycerol + phosphate. The catalysed reaction is 1,2-di-(9Z,12Z-octadecadienoyl)-sn-glycero-3-phosphate + H2O = 1,2-di-(9Z,12Z-octadecadienoyl)-sn-glycerol + phosphate. It carries out the reaction 1,2-di-(9Z-octadecenoyl)-sn-glycero-3-phosphate + H2O = 1,2-di-(9Z-octadecenoyl)-sn-glycerol + phosphate. The enzyme catalyses 1,2-dihexadecanoyl-sn-glycero-3-phosphate + H2O = 1,2-dihexadecanoyl-sn-glycerol + phosphate. With respect to regulation, potently inhibited by sphingolipids, in particular, the sphingoid bases sphinganine and sphingosine and ceramide-1-phosphate. Inhibited by concentrations of Mg(2+) and Mn(2+) above their optimums and by Ca(2+), Zn(2+), N-ethylmaleimide and propranolol. Its activity is regulated as follows. Sertraline and propanolol inhibit activity in dose-dependent manners with IC(50) values of 103 uM and 226 uM, respectively. Sertraline and propanolol inhibit activity in dose-dependent manners with IC(50) values of 108 uM and 271 uM, respectively. With respect to regulation, sertraline and propanolol inhibit activity in dose-dependent manners with IC(50) values of 143 uM and 227 uM, respectively. Acts as a magnesium-dependent phosphatidate phosphatase enzyme which catalyzes the conversion of phosphatidic acid to diacylglycerol during triglyceride, phosphatidylcholine and phosphatidylethanolamine biosynthesis and therefore controls the metabolism of fatty acids at different levels. Is involved in adipocyte differentiation. Recruited at the mitochondrion outer membrane and is involved in mitochondrial fission by converting phosphatidic acid to diacylglycerol. Acts also as nuclear transcriptional coactivator for PPARGC1A/PPARA regulatory pathway to modulate lipid metabolism gene expression. This chain is Phosphatidate phosphatase LPIN1, found in Homo sapiens (Human).